Consider the following 335-residue polypeptide: Ketol-acid reductoisomerase (NADP(+)) 2 (335 aa).

The KARI N-terminal Rossmann domain occupies 1 to 180 (MKTYYEQDAN…GCTRAGVIET (180 aa)). NADP(+) contacts are provided by residues 24 to 27 (YGSQ), Arg47, Ser51, and 81 to 84 (DEQQ). His106 is an active-site residue. Gly132 provides a ligand contact to NADP(+). The region spanning 181 to 326 (TFQEETETDL…EELREMMSWI (146 aa)) is the KARI C-terminal knotted domain. Residues Asp189, Glu193, Glu225, and Glu229 each coordinate Mg(2+). Residue Ser250 coordinates substrate.

It belongs to the ketol-acid reductoisomerase family. The cofactor is Mg(2+).

The catalysed reaction is (2R)-2,3-dihydroxy-3-methylbutanoate + NADP(+) = (2S)-2-acetolactate + NADPH + H(+). It carries out the reaction (2R,3R)-2,3-dihydroxy-3-methylpentanoate + NADP(+) = (S)-2-ethyl-2-hydroxy-3-oxobutanoate + NADPH + H(+). It functions in the pathway amino-acid biosynthesis; L-isoleucine biosynthesis; L-isoleucine from 2-oxobutanoate: step 2/4. The protein operates within amino-acid biosynthesis; L-valine biosynthesis; L-valine from pyruvate: step 2/4. Involved in the biosynthesis of branched-chain amino acids (BCAA). Catalyzes an alkyl-migration followed by a ketol-acid reduction of (S)-2-acetolactate (S2AL) to yield (R)-2,3-dihydroxy-isovalerate. In the isomerase reaction, S2AL is rearranged via a Mg-dependent methyl migration to produce 3-hydroxy-3-methyl-2-ketobutyrate (HMKB). In the reductase reaction, this 2-ketoacid undergoes a metal-dependent reduction by NADPH to yield (R)-2,3-dihydroxy-isovalerate. This Bacillus thuringiensis subsp. konkukian (strain 97-27) protein is Ketol-acid reductoisomerase (NADP(+)) 2.